Reading from the N-terminus, the 181-residue chain is Adenylate kinase (181 aa).

Residue 10-15 participates in ATP binding; the sequence is GAGKGT. The NMP stretch occupies residues 30 to 59; that stretch reads STGELFRKNIQDGTKLGIEAKRYLDAGDLV. Residues T31, R36, 57–59, 85–88, and Q92 each bind AMP; these read DLV and GYPR. The LID stretch occupies residues 126-132; it reads GRGRADD. Position 127 (R127) interacts with ATP. Residues R129 and R140 each coordinate AMP. Residue G166 coordinates ATP.

It belongs to the adenylate kinase family. Monomer.

It is found in the cytoplasm. It carries out the reaction AMP + ATP = 2 ADP. The protein operates within purine metabolism; AMP biosynthesis via salvage pathway; AMP from ADP: step 1/1. Functionally, catalyzes the reversible transfer of the terminal phosphate group between ATP and AMP. Plays an important role in cellular energy homeostasis and in adenine nucleotide metabolism. The chain is Adenylate kinase from Mycobacterium marinum (strain ATCC BAA-535 / M).